We begin with the raw amino-acid sequence, 222 residues long: UPF0688 protein C1orf174 homolog (222 aa).

Disordered regions lie at residues 23-57 (STSL…RTSK) and 98-158 (EDGA…EPVP). Over residues 33–48 (ASSTSAKTTCLASSSH) the composition is skewed to polar residues. The segment covering 121–131 (VSEEPSVKAEE) has biased composition (basic and acidic residues). Serine 172 carries the phosphoserine modification.

It belongs to the UPF0688 family.

Its subcellular location is the nucleus. This is UPF0688 protein C1orf174 homolog from Rattus norvegicus (Rat).